Consider the following 618-residue polypeptide: Putative ATP-dependent DNA helicase Q1 (618 aa).

In terms of domain architecture, Helicase ATP-binding spans isoleucine 95–isoleucine 270. Leucine 108–serine 115 provides a ligand contact to ATP. A DEVH box motif is present at residues aspartate 214–histidine 217. One can recognise a Helicase C-terminal domain in the interval cysteine 295–serine 443. Residues cysteine 448, cysteine 466, cysteine 470, and cysteine 473 each contribute to the Zn(2+) site. The disordered stretch occupies residues lysine 586 to leucine 618. The segment covering serine 603–leucine 618 has biased composition (acidic residues).

The protein belongs to the helicase family. RecQ subfamily. The cofactor is Zn(2+).

The protein localises to the nucleus. The enzyme catalyses Couples ATP hydrolysis with the unwinding of duplex DNA by translocating in the 3'-5' direction.. The catalysed reaction is ATP + H2O = ADP + phosphate + H(+). Functionally, DNA helicase that may play a role in the repair of DNA that is damaged by ultraviolet light or other mutagens. Exhibits a magnesium-dependent ATP-dependent DNA-helicase activity that unwinds single- and double-stranded DNA in a 3'-5' direction. This Caenorhabditis briggsae protein is Putative ATP-dependent DNA helicase Q1.